The primary structure comprises 106 residues: Protein aveugle (106 aa).

Positions 26–91 constitute an SAM domain; sequence WTVSDVLKWY…WREIVKQRLK (66 aa).

As to quaternary structure, interacts with the SAM domain of cnk.

The protein resides in the cytoplasm. Its subcellular location is the membrane. Required for normal photoreceptor differentiation between Ras and Raf for EGFR signaling in the eye and for mitogen-activated protein kinase phosphorylation. Probably acts together with Cnk to promote Raf activation, perhaps by recruiting an activating kinase. In Drosophila melanogaster (Fruit fly), this protein is Protein aveugle (ave).